The sequence spans 510 residues: Lysine--tRNA ligase (510 aa).

2 residues coordinate Mg(2+): Glu-420 and Glu-427.

It belongs to the class-II aminoacyl-tRNA synthetase family. As to quaternary structure, homodimer. Mg(2+) serves as cofactor.

It is found in the cytoplasm. The catalysed reaction is tRNA(Lys) + L-lysine + ATP = L-lysyl-tRNA(Lys) + AMP + diphosphate. The protein is Lysine--tRNA ligase of Clostridium novyi (strain NT).